The primary structure comprises 320 residues: 3-ketodihydrosphingosine reductase TSC10 (320 aa).

Residues 1–254 (MKFTLEDQVV…IIAKSLARGD (254 aa)) lie on the Cytoplasmic side of the membrane. NADP(+) is bound at residue leucine 11. NADPH is bound by residues glycine 14, serine 16, and glycine 18. A GXSXG motif is present at residues 14–18 (GGSQG). Leucine 19 is an NADP(+) binding site. NADPH contacts are provided by arginine 41, arginine 45, aspartate 89, and leucine 90. An NADP(+)-binding site is contributed by aspartate 89. The Proton donor role is filled by serine 166. 3 residues coordinate NADP(+): tyrosine 180, lysine 184, and serine 213. Tyrosine 180 (proton acceptor) is an active-site residue. Lysine 184 (lowers pKa of active site Tyr) is an active-site residue. A helical membrane pass occupies residues 255 to 275 (DDVFTDFVGWMIMGMDLGLTA). Residues 276–279 (KKSR) lie on the Lumenal side of the membrane. Residues 280-300 (FVPLQWIFGVLSNILVVPFYM) traverse the membrane as a helical segment. The Cytoplasmic portion of the chain corresponds to 301–320 (VGCSWYIRKWFRENDGKKAN).

The protein belongs to the short-chain dehydrogenases/reductases (SDR) family. Dimer or tetramer.

It is found in the endoplasmic reticulum membrane. The enzyme catalyses sphinganine + NADP(+) = 3-oxosphinganine + NADPH + H(+). Its pathway is lipid metabolism; sphingolipid metabolism. In terms of biological role, catalyzes the reduction of 3'-oxosphinganine (3-ketodihydrosphingosine/KDS) to sphinganine (dihydrosphingosine/DHS), the second step of de novo sphingolipid biosynthesis. The chain is 3-ketodihydrosphingosine reductase TSC10 from Saccharomyces cerevisiae (strain ATCC 204508 / S288c) (Baker's yeast).